The sequence spans 85 residues: Large ribosomal subunit protein bL27 (85 aa).

Residues 1–22 form a disordered region; that stretch reads MAHKKAGGSSRNGRDSESKRLG.

The protein belongs to the bacterial ribosomal protein bL27 family.

The sequence is that of Large ribosomal subunit protein bL27 from Tolumonas auensis (strain DSM 9187 / NBRC 110442 / TA 4).